Reading from the N-terminus, the 337-residue chain is MSEIRLNKKAYIHNLMQISNKAGGKERVMLVLKDNAYGHGAKLIAAAASEFGIKFCAVKSQSEALEIQRNFEKILILSHIANGDEDQNFIYAINDMKGLNRIKRGTRIHLVIDTNMHRNGLKFSELEAAFGPIKERGLALEGAYTHFRASDEMNADYFVQRQNFKEAKAEILRLCEKFAMPHPIFHSHNSAALERFGEFDDDMVRVGIAQHGYAQFDDSLNLKPVLSLWAQKVSERVLKAGQCVGYGAKFCADKDINIATYDLGYGDGLLRYAGDGELPLANGKAMLGKMSMDSFSCEDAGEWVCVFDDANVWARYFDTINYDILVKLSPNIKRKFV.

Lys33 acts as the Proton acceptor; specific for D-alanine in catalysis. Position 33 is an N6-(pyridoxal phosphate)lysine (Lys33). Position 118 (Arg118) interacts with substrate. Tyr246 acts as the Proton acceptor; specific for L-alanine in catalysis. Met292 is a substrate binding site.

Belongs to the alanine racemase family. Pyridoxal 5'-phosphate is required as a cofactor.

It carries out the reaction L-alanine = D-alanine. It functions in the pathway amino-acid biosynthesis; D-alanine biosynthesis; D-alanine from L-alanine: step 1/1. Its function is as follows. Catalyzes the interconversion of L-alanine and D-alanine. May also act on other amino acids. In Campylobacter curvus (strain 525.92), this protein is Alanine racemase (alr).